A 515-amino-acid chain; its full sequence is uncharacterized protein (515 aa).

3 consecutive transmembrane segments (helical) span residues 1–21, 165–185, and 199–219; these read MSFV…LAGI, IGGP…GLLF, and GPVG…GLFG. Positions 1 to 93 constitute a PE domain; that stretch reads MSFVVAAPEV…AGAYAGAEAA (93 aa). Residues 349-360 are compositionally biased toward gly residues; it reads GGTLIGNGGDGG. Disordered regions lie at residues 349 to 368 and 463 to 515; these read GGTL…TDGF and GVSG…SPGG.

It belongs to the mycobacterial PE family. PGRS subfamily.

The protein resides in the cell membrane. This is an uncharacterized protein from Mycobacterium tuberculosis (strain CDC 1551 / Oshkosh).